Reading from the N-terminus, the 269-residue chain is Hydroxyethylthiazole kinase (269 aa).

Residue Met43 participates in substrate binding. 2 residues coordinate ATP: Arg119 and Ser165. Ala192 is a substrate binding site.

It belongs to the Thz kinase family. The cofactor is Mg(2+).

It carries out the reaction 5-(2-hydroxyethyl)-4-methylthiazole + ATP = 4-methyl-5-(2-phosphooxyethyl)-thiazole + ADP + H(+). The protein operates within cofactor biosynthesis; thiamine diphosphate biosynthesis; 4-methyl-5-(2-phosphoethyl)-thiazole from 5-(2-hydroxyethyl)-4-methylthiazole: step 1/1. In terms of biological role, catalyzes the phosphorylation of the hydroxyl group of 4-methyl-5-beta-hydroxyethylthiazole (THZ). In Glaesserella parasuis serovar 5 (strain SH0165) (Haemophilus parasuis), this protein is Hydroxyethylthiazole kinase.